We begin with the raw amino-acid sequence, 1140 residues long: Condensin-2 complex subunit G2 (1140 aa).

Residues 460 to 493 (LLPALKSSLHDSSEKVRVAFVGMLLKIKAARAAK) form an HEAT repeat.

As to quaternary structure, component of the condensin-2 complex, which contains the smc2 and smc4 heterodimer, and three non SMC subunits that probably regulate the complex: ncaph2, ncapd3 and ncapg2.

It localises to the nucleus. Functionally, regulatory subunit of the condensin-2 complex, a complex which establishes mitotic chromosome architecture and is involved in physical rigidity of the chromatid axis. Plays a role in the embryonic development of the head and kidney structures. The polypeptide is Condensin-2 complex subunit G2 (Danio rerio (Zebrafish)).